A 1199-amino-acid chain; its full sequence is DNA-directed RNA polymerase subunit beta (1199 aa).

The segment at 1175–1199 (EEKKAHEAAAQATDGKSANSTDDKK) is disordered. Positions 1188–1199 (DGKSANSTDDKK) are enriched in polar residues.

This sequence belongs to the RNA polymerase beta chain family. In terms of assembly, the RNAP catalytic core consists of 2 alpha, 1 beta, 1 beta' and 1 omega subunit. When a sigma factor is associated with the core the holoenzyme is formed, which can initiate transcription.

The catalysed reaction is RNA(n) + a ribonucleoside 5'-triphosphate = RNA(n+1) + diphosphate. Its function is as follows. DNA-dependent RNA polymerase catalyzes the transcription of DNA into RNA using the four ribonucleoside triphosphates as substrates. In Lacticaseibacillus paracasei (strain ATCC 334 / BCRC 17002 / CCUG 31169 / CIP 107868 / KCTC 3260 / NRRL B-441) (Lactobacillus paracasei), this protein is DNA-directed RNA polymerase subunit beta.